A 212-amino-acid chain; its full sequence is Small ribosomal subunit protein uS3 (212 aa).

Positions 39–108 (IKNYIKERYK…EITISVVEVR (70 aa)) constitute a KH type-2 domain.

It belongs to the universal ribosomal protein uS3 family. In terms of assembly, part of the 30S ribosomal subunit. Forms a tight complex with proteins S10 and S14.

In terms of biological role, binds the lower part of the 30S subunit head. Binds mRNA in the 70S ribosome, positioning it for translation. The polypeptide is Small ribosomal subunit protein uS3 (Aquifex aeolicus (strain VF5)).